The primary structure comprises 334 residues: Dual specificity mitogen-activated protein kinase kinase 6 (334 aa).

The segment covering M1 to P11 has biased composition (basic residues). The disordered stretch occupies residues M1 to D34. A d domain region spans residues S4–A19. Positions L53–F314 constitute a Protein kinase domain. ATP-binding positions include L59–V67 and K82. D179 serves as the catalytic Proton acceptor. S207 is subject to (Microbial infection) O-acetylserine; by Yersinia YopJ; alternate. S207 bears the Phosphoserine; by MAP3K; alternate mark. T211 bears the (Microbial infection) O-acetylthreonine; by Yersinia YopJ; alternate mark. T211 is subject to Phosphothreonine; by MAP3K; alternate. Residues H311–D334 are DVD domain.

This sequence belongs to the protein kinase superfamily. STE Ser/Thr protein kinase family. MAP kinase kinase subfamily. As to quaternary structure, dimer. Interacts (via its D domain) with its substrates MAPK11, MAPK12, MAPK13 and MAPK14. Interacts (via its DVD domain) with MAP3Ks activators like MAP3K5/ASK1, MAP3K1/MEKK1, MAP3K2/MEKK2, MAP3K3/MEKK3, MAP3K4/MEKK4, MAP3K7/TAK1, MAP3K11/MLK3 and MAP3K17/TAOK2. Interacts with DCTN1. Interacts with EIF2AK2/PKR. In terms of assembly, (Microbial infection) Interacts with Yersinia YopJ. In terms of processing, weakly autophosphorylated. Phosphorylated at Ser-207 and Thr-211 by the majority of M3Ks, such as MAP3K5/ASK1, MAP3K1/MEKK1, MAP3K2/MEKK2, MAP3K3/MEKK3, MAP3K4/MEKK4, MAP3K7/TAK1, MAP3K11/MLK3 and MAP3K17/TAOK2. In response to genotoxic stress, MAP3K-phosphorylated MAP2K6 is ubiquitinated and degraded by the SCF(FBXO31) complex. Post-translationally, (Microbial infection) Acetylation of Ser-207 and Thr-211 by Yersinia YopJ prevents phosphorylation and activation, thus blocking the MAPK signaling pathway. As to expression, isoform 2 is only expressed in skeletal muscle. Isoform 1 is expressed in skeletal muscle, heart, and in lesser extent in liver or pancreas.

Its subcellular location is the nucleus. The protein resides in the cytoplasm. It localises to the cytoskeleton. The enzyme catalyses L-seryl-[protein] + ATP = O-phospho-L-seryl-[protein] + ADP + H(+). It carries out the reaction L-threonyl-[protein] + ATP = O-phospho-L-threonyl-[protein] + ADP + H(+). The catalysed reaction is L-tyrosyl-[protein] + ATP = O-phospho-L-tyrosyl-[protein] + ADP + H(+). Its activity is regulated as follows. Activated by dual phosphorylation on Ser-207 and Thr-211 in response to a variety of cellular stresses, including UV radiation, osmotic shock, hypoxia, inflammatory cytokines, interferon gamma (IFNG), and less often by growth factors. MAP2K6/MKK6 is activated by the majority of M3Ks, such as MAP3K5/ASK1, MAP3K1/MEKK1, MAP3K2/MEKK2, MAP3K3/MEKK3, MAP3K4/MEKK4, MAP3K7/TAK1, MAP3K11/MLK3 and MAP3K17/TAOK2. Dual specificity protein kinase which acts as an essential component of the MAP kinase signal transduction pathway. With MAP3K3/MKK3, catalyzes the concomitant phosphorylation of a threonine and a tyrosine residue in the MAP kinases p38 MAPK11, MAPK12, MAPK13 and MAPK14 and plays an important role in the regulation of cellular responses to cytokines and all kinds of stresses. Especially, MAP2K3/MKK3 and MAP2K6/MKK6 are both essential for the activation of MAPK11 and MAPK13 induced by environmental stress, whereas MAP2K6/MKK6 is the major MAPK11 activator in response to TNF. MAP2K6/MKK6 also phosphorylates and activates PAK6. The p38 MAP kinase signal transduction pathway leads to direct activation of transcription factors. Nuclear targets of p38 MAP kinase include the transcription factors ATF2 and ELK1. Within the p38 MAPK signal transduction pathway, MAP3K6/MKK6 mediates phosphorylation of STAT4 through MAPK14 activation, and is therefore required for STAT4 activation and STAT4-regulated gene expression in response to IL-12 stimulation. The pathway is also crucial for IL-6-induced SOCS3 expression and down-regulation of IL-6-mediated gene induction; and for IFNG-dependent gene transcription. Has a role in osteoclast differentiation through NF-kappa-B transactivation by TNFSF11, and in endochondral ossification and since SOX9 is another likely downstream target of the p38 MAPK pathway. MAP2K6/MKK6 mediates apoptotic cell death in thymocytes. Acts also as a regulator for melanocytes dendricity, through the modulation of Rho family GTPases. The chain is Dual specificity mitogen-activated protein kinase kinase 6 (MAP2K6) from Homo sapiens (Human).